The chain runs to 28 residues: Cyclotide vodo I2 (28 aa).

3 disulfides stabilise this stretch: cysteine 4-cysteine 18, cysteine 8-cysteine 20, and cysteine 13-cysteine 25.

Post-translationally, this is a cyclic peptide. Contains 3 disulfide bonds.

In terms of biological role, probably participates in a plant defense mechanism. This is Cyclotide vodo I2 from Viola odorata (Sweet violet).